A 514-amino-acid polypeptide reads, in one-letter code: RNA-binding region-containing protein 3 (514 aa).

The tract at residues Met1–Asp26 is disordered. Ser21 carries the phosphoserine modification. Residues Arg27–Glu102 enclose the RRM 1 domain. Disordered stretches follow at residues Val106–Glu133, Met213–Lys282, and Glu337–Ile363. Position 108 is a phosphoserine (Ser108). A compositionally biased stretch (basic and acidic residues) spans Thr115–Glu133. Residues Ala217–Pro230 show a composition bias toward pro residues. Ser349 is modified (phosphoserine). Positions Cys418–Ser501 constitute an RRM 2 domain.

As to quaternary structure, component of the U11/U12 snRNPs that are part of the U12-type spliceosome. Found in a complex with m(7)G-capped U12 snRNA. Interacts with PDCD7.

The protein localises to the nucleus. Its function is as follows. Participates in pre-mRNA U12-dependent splicing, performed by the minor spliceosome which removes U12-type introns. U12-type introns comprises less than 1% of all non-coding sequences. Binds to the 3'-stem-loop of m(7)G-capped U12 snRNA. The chain is RNA-binding region-containing protein 3 (Rnpc3) from Mus musculus (Mouse).